Reading from the N-terminus, the 677-residue chain is Secretogranin-1 (677 aa).

The signal sequence occupies residues 1–20; it reads MQPTLLLSLLGAVGLAAVNS. Cys36 and Cys57 are joined by a disulfide. 2 stretches are compositionally biased toward basic and acidic residues: residues 64–100 and 118–136; these read SRKDVKDKETTENENTKFEVRLLRDPADASEAHESSS and ADTEKWAEGGGHSRERADE. Positions 64–463 are disordered; that stretch reads SRKDVKDKET…DKARRHPQGA (400 aa). Position 79 is a phosphothreonine (Thr79). Ser93, Ser99, and Ser100 each carry phosphoserine. Ser93 is a glycosylation site (O-linked (Xyl...) (chondroitin sulfate) serine). The O-glycosylated at one site stretch occupies residues 116 to 120; that stretch reads TKADT. Ser130 carries the phosphoserine; by FAM20C modification. The residue at position 149 (Ser149) is a Phosphoserine. Composition is skewed to basic and acidic residues over residues 150-162, 172-190, and 200-236; these read EEVKTRHSEKSQR, NYQKGERGEDSSEEKHLEE, and NERKQASAIKKEELVARSETHAAGHSQEKTHSREKSS. Ser183 is modified (phosphoserine). Ser225 is modified (phosphoserine; by FAM20C). The O-linked (Xyl...) (chondroitin sulfate) serine glycan is linked to Ser239. Residues Ser259 and Ser263 each carry the phosphoserine modification. Acidic residues predominate over residues 262 to 272; it reads ESEEGEEDATS. Over residues 277–287 the composition is skewed to basic residues; it reads RRTRPRHHHGR. Phosphoserine is present on residues Ser293, Ser294, Ser311, and Ser335. A Sulfotyrosine modification is found at Tyr341. The segment covering 359-372 has biased composition (basic and acidic residues); that stretch reads WERYRGRGSEEYRA. Ser367, Ser377, and Ser380 each carry phosphoserine; by FAM20C. Composition is skewed to basic and acidic residues over residues 384–415 and 433–455; these read EDKRNYPSLELDKMAHGYGEESEEERGLEPGK and DTREEKRFLGEGHHRVQENQMDK. A Phosphotyrosine modification is found at Tyr401. Ser405 bears the Phosphoserine mark. Position 474 is a sulfotyrosine (Tyr474). The segment at 475-512 is disordered; the sequence is GEEGAPGKWQQQGDLQDTKENREEARFQDKQYSSHHTA. A compositionally biased stretch (basic and acidic residues) spans 490–503; that stretch reads QDTKENREEARFQD. A phosphoserine mark is found at Ser533 and Ser534. Sulfotyrosine is present on Tyr566. Ser617 is subject to Phosphoserine. The interval 622 to 653 is disordered; that stretch reads DFYDSEEPVSTHQEAENEKDRADQTVLTEDEK. Tyr624 is subject to Sulfotyrosine. 2 positions are modified to phosphoserine: Ser626 and Ser631. Residues 634 to 653 show a composition bias toward basic and acidic residues; sequence QEAENEKDRADQTVLTEDEK.

This sequence belongs to the chromogranin/secretogranin protein family. In terms of assembly, interacts with ITPR1 in the secretory granules. Post-translationally, extensively processed by limited proteolysis at conserved basic residues. Alternative processing are seen in different tissues. In terms of processing, O-glycosylated. In terms of tissue distribution, detected in cerebrospinal fluid and urine (at protein level). Expressed in the adrenal medulla, and in pheochromocytoma. Not expressed in liver.

It is found in the secreted. In terms of biological role, secretogranin-1 is a neuroendocrine secretory granule protein, which may be the precursor for other biologically active peptides. In Homo sapiens (Human), this protein is Secretogranin-1 (CHGB).